A 125-amino-acid chain; its full sequence is Ribosome-binding factor A (125 aa).

The protein belongs to the RbfA family. Monomer. Binds 30S ribosomal subunits, but not 50S ribosomal subunits or 70S ribosomes.

It is found in the cytoplasm. Its function is as follows. One of several proteins that assist in the late maturation steps of the functional core of the 30S ribosomal subunit. Associates with free 30S ribosomal subunits (but not with 30S subunits that are part of 70S ribosomes or polysomes). Required for efficient processing of 16S rRNA. May interact with the 5'-terminal helix region of 16S rRNA. The sequence is that of Ribosome-binding factor A from Fervidobacterium nodosum (strain ATCC 35602 / DSM 5306 / Rt17-B1).